The chain runs to 123 residues: S-adenosylmethionine decarboxylase proenzyme 2 (123 aa).

Ser65 serves as the catalytic Schiff-base intermediate with substrate; via pyruvic acid. Ser65 is modified (pyruvic acid (Ser); by autocatalysis). Catalysis depends on His70, which acts as the Proton acceptor; for processing activity. Cys85 serves as the catalytic Proton donor; for catalytic activity.

Belongs to the prokaryotic AdoMetDC family. Type 1 subfamily. Heterotetramer of two alpha and two beta chains arranged as a dimer of alpha/beta heterodimers. Pyruvate serves as cofactor. Post-translationally, is synthesized initially as an inactive proenzyme. Formation of the active enzyme involves a self-maturation process in which the active site pyruvoyl group is generated from an internal serine residue via an autocatalytic post-translational modification. Two non-identical subunits are generated from the proenzyme in this reaction, and the pyruvate is formed at the N-terminus of the alpha chain, which is derived from the carboxyl end of the proenzyme. The post-translation cleavage follows an unusual pathway, termed non-hydrolytic serinolysis, in which the side chain hydroxyl group of the serine supplies its oxygen atom to form the C-terminus of the beta chain, while the remainder of the serine residue undergoes an oxidative deamination to produce ammonia and the pyruvoyl group blocking the N-terminus of the alpha chain.

It carries out the reaction S-adenosyl-L-methionine + H(+) = S-adenosyl 3-(methylsulfanyl)propylamine + CO2. The protein operates within amine and polyamine biosynthesis; S-adenosylmethioninamine biosynthesis; S-adenosylmethioninamine from S-adenosyl-L-methionine: step 1/1. Functionally, catalyzes the decarboxylation of S-adenosylmethionine to S-adenosylmethioninamine (dcAdoMet), the propylamine donor required for the synthesis of the polyamines spermine and spermidine from the diamine putrescine. This Bacillus cereus (strain ZK / E33L) protein is S-adenosylmethionine decarboxylase proenzyme 2.